The primary structure comprises 876 residues: Liprin-beta-2 (876 aa).

The stretch at 101 to 313 forms a coiled coil; sequence AASNETYQER…TGLLNQYRKV (213 aa). Phosphoserine occurs at positions 329, 363, and 387. The tract at residues 356–376 is disordered; the sequence is EMPPRCSSPTVGPPPLPQKSL. Disordered regions lie at residues 425 to 451 and 470 to 500; these read LPGK…PDAT and VVND…PKGI. Residues 473–489 show a composition bias toward polar residues; it reads DLSSTSSGTESGPQSPL. Ser-512 carries the phosphoserine modification. Positions 527 to 553 are disordered; the sequence is RGGLRATAGPRLSRTRDSKGQKSDANA. SAM domains lie at 558 to 622, 630 to 693, and 718 to 783; these read WSTE…INTK, LDHI…LHVN, and WSNH…KFNA.

It belongs to the liprin family. Liprin-beta subfamily. In terms of assembly, forms homodimers and heterodimers. As to expression, widely expressed.

Functionally, may regulate the disassembly of focal adhesions. Did not bind receptor-like tyrosine phosphatases type 2A. This Homo sapiens (Human) protein is Liprin-beta-2 (PPFIBP2).